Reading from the N-terminus, the 209-residue chain is Probable GTP-binding protein EngB (209 aa).

The EngB-type G domain maps to 22–198 (TPLEIAFVGR…NRTVGSWFDA (177 aa)). Serine 37 and threonine 59 together coordinate Mg(2+).

The protein belongs to the TRAFAC class TrmE-Era-EngA-EngB-Septin-like GTPase superfamily. EngB GTPase family. Mg(2+) serves as cofactor.

Necessary for normal cell division and for the maintenance of normal septation. This chain is Probable GTP-binding protein EngB, found in Neisseria gonorrhoeae.